We begin with the raw amino-acid sequence, 101 residues long: Small ribosomal subunit protein uS14 (101 aa).

This sequence belongs to the universal ribosomal protein uS14 family. In terms of assembly, part of the 30S ribosomal subunit. Contacts proteins S3 and S10.

In terms of biological role, binds 16S rRNA, required for the assembly of 30S particles and may also be responsible for determining the conformation of the 16S rRNA at the A site. In Leifsonia xyli subsp. xyli (strain CTCB07), this protein is Small ribosomal subunit protein uS14.